Here is a 66-residue protein sequence, read N- to C-terminus: Large ribosomal subunit protein bL31 (66 aa).

Zn(2+) is bound by residues cysteine 16, cysteine 18, cysteine 36, and cysteine 39.

The protein belongs to the bacterial ribosomal protein bL31 family. Type A subfamily. Part of the 50S ribosomal subunit. It depends on Zn(2+) as a cofactor.

Binds the 23S rRNA. The chain is Large ribosomal subunit protein bL31 from Sulfurimonas denitrificans (strain ATCC 33889 / DSM 1251) (Thiomicrospira denitrificans (strain ATCC 33889 / DSM 1251)).